An 88-amino-acid chain; its full sequence is Apolipoprotein C-I (88 aa).

The first 26 residues, 1–26 (MRLFIALPVLIVVVAMALEGPAPAQA), serve as a signal peptide directing secretion.

Belongs to the apolipoprotein C1 family.

It localises to the secreted. Inhibitor of lipoprotein binding to the low density lipoprotein (LDL) receptor, LDL receptor-related protein, and very low density lipoprotein (VLDL) receptor. Associates with high density lipoproteins (HDL) and the triacylglycerol-rich lipoproteins in the plasma and makes up about 10% of the protein of the VLDL and 2% of that of HDL. Appears to interfere directly with fatty acid uptake and is also the major plasma inhibitor of cholesteryl ester transfer protein (CETP). Binds free fatty acids and reduces their intracellular esterification. Modulates the interaction of APOE with beta-migrating VLDL and inhibits binding of beta-VLDL to the LDL receptor-related protein. The sequence is that of Apolipoprotein C-I (Apoc1) from Rattus norvegicus (Rat).